We begin with the raw amino-acid sequence, 159 residues long: Cytochrome c-type biogenesis protein CcmE (159 aa).

Over 1–8 (MNLRRKNR) the chain is Cytoplasmic. A helical; Signal-anchor for type II membrane protein membrane pass occupies residues 9–29 (LWVVCAVLAGLGLTTALVLYA). At 30-159 (LRANIDLFYT…PQRADKDTSS (130 aa)) the chain is on the periplasmic side. Residues 129-159 (KHDENYTPPEVEKAMQENHRRPQRADKDTSS) are disordered. Positions 130 and 134 each coordinate heme.

The protein belongs to the CcmE/CycJ family.

It localises to the cell inner membrane. Heme chaperone required for the biogenesis of c-type cytochromes. Transiently binds heme delivered by CcmC and transfers the heme to apo-cytochromes in a process facilitated by CcmF and CcmH. The protein is Cytochrome c-type biogenesis protein CcmE of Salmonella typhimurium (strain LT2 / SGSC1412 / ATCC 700720).